The chain runs to 238 residues: Ribonuclease PH (238 aa).

Residues arginine 86 and 124 to 126 each bind phosphate; that span reads GTR.

It belongs to the RNase PH family. Homohexameric ring arranged as a trimer of dimers.

The enzyme catalyses tRNA(n+1) + phosphate = tRNA(n) + a ribonucleoside 5'-diphosphate. In terms of biological role, phosphorolytic 3'-5' exoribonuclease that plays an important role in tRNA 3'-end maturation. Removes nucleotide residues following the 3'-CCA terminus of tRNAs; can also add nucleotides to the ends of RNA molecules by using nucleoside diphosphates as substrates, but this may not be physiologically important. Probably plays a role in initiation of 16S rRNA degradation (leading to ribosome degradation) during starvation. This is Ribonuclease PH from Escherichia coli O6:K15:H31 (strain 536 / UPEC).